A 399-amino-acid polypeptide reads, in one-letter code: LEM domain-containing protein Bocksbeutel (399 aa).

In terms of domain architecture, LEM spans 4-48 (LSYLDTLGNKELLAKCLEHGLPGVPVTDSTRSVIIRRLKAKITGV). Disordered stretches follow at residues 49–103 (PLNK…EQSR), 119–141 (SVQT…SYMV), and 233–287 (NSTS…SNLA). Composition is skewed to polar residues over residues 68–77 (HGSQVTTPTS) and 89–99 (GRTSSNNNKIS). The span at 233 to 256 (NSTSYEESSTYNPKLSPISPRNTF) shows a compositional bias: polar residues. The chain crosses the membrane as a helical span at residues 377–397 (FYLILVVSVMLATMVYVVLTP).

Its subcellular location is the nucleus inner membrane. The protein resides in the cytoplasm. The protein localises to the nucleus. It is found in the nucleoplasm. It localises to the endoplasmic reticulum. Inner nuclear membrane protein. May have a role in maintaining the structural integrity of the nuclear lamina. During pupal development, plays essential and redundant functions with the other LEM domain proteins; MAN1 and Ote. Also has a redundant but important role with Ote in larval development. This Drosophila melanogaster (Fruit fly) protein is LEM domain-containing protein Bocksbeutel.